The following is a 231-amino-acid chain: A-type ATP synthase subunit D (231 aa).

The protein belongs to the V-ATPase D subunit family. In terms of assembly, has multiple subunits with at least A(3), B(3), C, D, E, F, H, I and proteolipid K(x).

The protein localises to the cell membrane. Functionally, component of the A-type ATP synthase that produces ATP from ADP in the presence of a proton gradient across the membrane. The protein is A-type ATP synthase subunit D of Methanobrevibacter smithii (strain ATCC 35061 / DSM 861 / OCM 144 / PS).